A 211-amino-acid polypeptide reads, in one-letter code: Probable transcription repressor protein RGM1 (211 aa).

Positions 6–11 (PKRNKD) match the Nuclear localization signal motif. 2 C2H2-type zinc fingers span residues 19-44 (YRCVGYPDCNMSFNRTEHLARHIRKH) and 50-73 (FQCNICLKFFSRIDNLRQHQSSVH). Residues 178–211 (NIVELPPDSSDTPASPSKVQSFDQAKDASPNAKK) form a disordered region. Over residues 183-194 (PPDSSDTPASPS) the composition is skewed to low complexity.

It localises to the nucleus. The protein is Probable transcription repressor protein RGM1 (RGM1) of Saccharomyces cerevisiae (strain ATCC 204508 / S288c) (Baker's yeast).